We begin with the raw amino-acid sequence, 569 residues long: Aspartate--tRNA ligase, cytoplasmic 2 (569 aa).

A disordered region spans residues methionine 1–glutamate 23. Residues glutamine 292–arginine 295 form an aspartate region. L-aspartate is bound at residue arginine 314. ATP contacts are provided by residues arginine 314–aspartate 316 and arginine 322–leucine 324. L-aspartate contacts are provided by serine 475 and arginine 479. Glycine 540–arginine 543 contributes to the ATP binding site.

It belongs to the class-II aminoacyl-tRNA synthetase family. Type 2 subfamily.

Its subcellular location is the cytoplasm. It carries out the reaction tRNA(Asp) + L-aspartate + ATP = L-aspartyl-tRNA(Asp) + AMP + diphosphate. This chain is Aspartate--tRNA ligase, cytoplasmic 2 (aspS2), found in Dictyostelium discoideum (Social amoeba).